The following is a 368-amino-acid chain: Chorismate synthase (368 aa).

Arg-46 serves as a coordination point for NADP(+). FMN contacts are provided by residues 124 to 126 (RAS), Gly-284, 299 to 303 (KPTPS), and Arg-326.

This sequence belongs to the chorismate synthase family. FMNH2 is required as a cofactor.

It carries out the reaction 5-O-(1-carboxyvinyl)-3-phosphoshikimate = chorismate + phosphate. It participates in metabolic intermediate biosynthesis; chorismate biosynthesis; chorismate from D-erythrose 4-phosphate and phosphoenolpyruvate: step 7/7. Catalyzes the anti-1,4-elimination of the C-3 phosphate and the C-6 proR hydrogen from 5-enolpyruvylshikimate-3-phosphate (EPSP) to yield chorismate, which is the branch point compound that serves as the starting substrate for the three terminal pathways of aromatic amino acid biosynthesis. This reaction introduces a second double bond into the aromatic ring system. This is Chorismate synthase from Pyrobaculum arsenaticum (strain DSM 13514 / JCM 11321 / PZ6).